Reading from the N-terminus, the 238-residue chain is Pyridoxine 5'-phosphate synthase (238 aa).

Asn6 is a binding site for 3-amino-2-oxopropyl phosphate. 8–9 (DH) is a 1-deoxy-D-xylulose 5-phosphate binding site. Arg17 contributes to the 3-amino-2-oxopropyl phosphate binding site. The active-site Proton acceptor is the His42. 1-deoxy-D-xylulose 5-phosphate is bound by residues Arg44 and His49. The active-site Proton acceptor is Glu69. Thr99 is a binding site for 1-deoxy-D-xylulose 5-phosphate. The Proton donor role is filled by His186. Residues Gly187 and 208-209 (GH) each bind 3-amino-2-oxopropyl phosphate.

The protein belongs to the PNP synthase family. In terms of assembly, homooctamer; tetramer of dimers.

The protein localises to the cytoplasm. It catalyses the reaction 3-amino-2-oxopropyl phosphate + 1-deoxy-D-xylulose 5-phosphate = pyridoxine 5'-phosphate + phosphate + 2 H2O + H(+). The protein operates within cofactor biosynthesis; pyridoxine 5'-phosphate biosynthesis; pyridoxine 5'-phosphate from D-erythrose 4-phosphate: step 5/5. Catalyzes the complicated ring closure reaction between the two acyclic compounds 1-deoxy-D-xylulose-5-phosphate (DXP) and 3-amino-2-oxopropyl phosphate (1-amino-acetone-3-phosphate or AAP) to form pyridoxine 5'-phosphate (PNP) and inorganic phosphate. In Anaplasma marginale (strain St. Maries), this protein is Pyridoxine 5'-phosphate synthase.